We begin with the raw amino-acid sequence, 93 residues long: Protein NONRESPONDING TO OXYLIPINS 2, mitochondrial (93 aa).

A mitochondrion-targeting transit peptide spans 1–27 (MASRCRSLSKPAFSAFRSAMNKPSIRP).

Expressed in cotyledons, roots and flowers.

The protein localises to the mitochondrion. Essential for mitochondrial morphology, functionality and distribution. Contributes to 9-lipoxygenase (9-LOX)-derived oxylipin synthesis, but not to brassinosteroids (BRs) signaling. Required for waving-inducing oxylipin 9-hydroxyoctadecatrienoic acid and derivatives (e.g. 9-HOT, 2-HOE, 13-HOT, 13-HOD, 13-KOD, 12,13-KHOD, 9-HOT, 9-HOD, 9-KOT, 9-KOD and 9,10-KHOE)-mediated root development regulation, including callose deposition, root waving and lateral roots formation. Involved in basal plant defense toward pathogenic bacteria (e.g. Pseudomonas syringae pv tomato), both in compatible (e.g. Pst DC3000) and incompatible (e.g. Pst DC3000 avrRPM1) interactions, as well as against obligate biotrophic pathogenic fungi (e.g. Golovinomyces cichoracearum), probably via the promotion of callose deposition in the cell wall. Confers sensitivity to the herbicide isoxaben, a herbicide inhibiting cellulose synthesis and altering the cell wall. The sequence is that of Protein NONRESPONDING TO OXYLIPINS 2, mitochondrial from Arabidopsis thaliana (Mouse-ear cress).